We begin with the raw amino-acid sequence, 584 residues long: Putative poly(A) polymerase catalytic subunit (584 aa).

Basic and acidic residues predominate over residues 522–531 (EAEISEKEET). Residues 522–584 (EAEISEKEET…ENSLDSLTSD (63 aa)) are disordered. Over residues 546 to 569 (SPNSSPNSSPNNSLNNSIDISTNN) the composition is skewed to low complexity.

It belongs to the poxviridae poly(A) polymerase catalytic subunit family. Highly divergent.

Its subcellular location is the virion. It carries out the reaction RNA(n) + ATP = RNA(n)-3'-adenine ribonucleotide + diphosphate. In terms of biological role, polymerase that creates the 3'-poly(A) tail of mRNA's. This chain is Putative poly(A) polymerase catalytic subunit, found in Acanthamoeba polyphaga (Amoeba).